Reading from the N-terminus, the 531-residue chain is T-complex protein 1 subunit zeta (531 aa).

N-acetylalanine is present on alanine 2. Lysine 5 carries the N6-acetyllysine modification. Residue glycine 39 coordinates ADP. Residue glycine 39 coordinates ATP. Aspartate 90 serves as a coordination point for Mg(2+). ADP is bound by residues glycine 91, threonine 92, threonine 93, serine 94, threonine 158, and lysine 159. ATP contacts are provided by glycine 91, threonine 92, and threonine 93. At lysine 199 the chain carries N6-acetyllysine. Position 205 is a phosphoserine (serine 205). A Glycyl lysine isopeptide (Lys-Gly) (interchain with G-Cter in SUMO2) cross-link involves residue lysine 251. Lysine 287, lysine 365, lysine 377, and lysine 388 each carry N6-acetyllysine. ADP is bound at residue alanine 411. Residues alanine 411, glycine 412, aspartate 496, and lysine 501 each coordinate ATP. ADP is bound at residue aspartate 496.

It belongs to the TCP-1 chaperonin family. As to quaternary structure, component of the chaperonin-containing T-complex (TRiC), a hexadecamer composed of two identical back-to-back stacked rings enclosing a protein folding chamber. Each ring is made up of eight different subunits: TCP1/CCT1, CCT2, CCT3, CCT4, CCT5, CCT6A/CCT6, CCT7, CCT8. Interacts with PACRG.

The protein resides in the cytoplasm. It catalyses the reaction ATP + H2O = ADP + phosphate + H(+). Functionally, component of the chaperonin-containing T-complex (TRiC), a molecular chaperone complex that assists the folding of actin, tubulin and other proteins upon ATP hydrolysis. The TRiC complex mediates the folding of WRAP53/TCAB1, thereby regulating telomere maintenance. In Homo sapiens (Human), this protein is T-complex protein 1 subunit zeta (CCT6A).